Here is a 340-residue protein sequence, read N- to C-terminus: DNA-directed RNA polymerase subunit alpha (340 aa).

Residues 1-233 are alpha N-terminal domain (alpha-NTD); that stretch reads MVREEVAVST…DLFIPFLHAE (233 aa). The segment at 266 to 340 is alpha C-terminal domain (alpha-CTD); the sequence is KKEIALKCIF…GIDLPKNKRF (75 aa).

This sequence belongs to the RNA polymerase alpha chain family. In plastids the minimal PEP RNA polymerase catalytic core is composed of four subunits: alpha, beta, beta', and beta''. When a (nuclear-encoded) sigma factor is associated with the core the holoenzyme is formed, which can initiate transcription.

It is found in the plastid. Its subcellular location is the chloroplast. It carries out the reaction RNA(n) + a ribonucleoside 5'-triphosphate = RNA(n+1) + diphosphate. Its function is as follows. DNA-dependent RNA polymerase catalyzes the transcription of DNA into RNA using the four ribonucleoside triphosphates as substrates. The protein is DNA-directed RNA polymerase subunit alpha of Calycanthus floridus var. glaucus (Eastern sweetshrub).